Reading from the N-terminus, the 355-residue chain is Phenylalanine--tRNA ligase alpha subunit (355 aa).

Residue E273 participates in Mg(2+) binding.

Belongs to the class-II aminoacyl-tRNA synthetase family. Phe-tRNA synthetase alpha subunit type 1 subfamily. In terms of assembly, tetramer of two alpha and two beta subunits. It depends on Mg(2+) as a cofactor.

The protein resides in the cytoplasm. The catalysed reaction is tRNA(Phe) + L-phenylalanine + ATP = L-phenylalanyl-tRNA(Phe) + AMP + diphosphate + H(+). The protein is Phenylalanine--tRNA ligase alpha subunit of Bifidobacterium animalis subsp. lactis (strain AD011).